The primary structure comprises 328 residues: 2-hydroxyisoflavanone dehydratase (328 aa).

Positions 85–87 (HGG) match the Involved in the stabilization of the negatively charged intermediate by the formation of the oxyanion hole motif. Catalysis depends on residues Thr173, Asp272, and His304.

This sequence belongs to the 'GDXG' lipolytic enzyme family.

The enzyme catalyses (2R,3S)-2,4',7-trihydroxyisoflavanone = daidzein + H2O + H(+). It catalyses the reaction 2-hydroxy-2,3-dihydrogenistein = genistein + H2O + H(+). The catalysed reaction is a carboxylic ester + H2O = an alcohol + a carboxylate + H(+). It participates in secondary metabolite biosynthesis; flavonoid biosynthesis. Functionally, dehydratase that mediates the biosynthesis of isoflavonoids. Can better use 2,7-dihydroxy-4'-methoxyisoflavanone as substrate. Has also a slight carboxylesterase activity toward p-nitrophenyl butyrate. This chain is 2-hydroxyisoflavanone dehydratase (HIDM), found in Glycyrrhiza echinata (Licorice).